A 273-amino-acid polypeptide reads, in one-letter code: Formamidopyrimidine-DNA glycosylase (273 aa).

Proline 2 functions as the Schiff-base intermediate with DNA in the catalytic mechanism. Glutamate 3 acts as the Proton donor in catalysis. The active-site Proton donor; for beta-elimination activity is lysine 59. Residues histidine 92 and arginine 111 each coordinate DNA. The segment at lysine 239–lysine 273 adopts an FPG-type zinc-finger fold. The active-site Proton donor; for delta-elimination activity is the arginine 263.

Belongs to the FPG family. As to quaternary structure, monomer. Requires Zn(2+) as cofactor.

The catalysed reaction is Hydrolysis of DNA containing ring-opened 7-methylguanine residues, releasing 2,6-diamino-4-hydroxy-5-(N-methyl)formamidopyrimidine.. It catalyses the reaction 2'-deoxyribonucleotide-(2'-deoxyribose 5'-phosphate)-2'-deoxyribonucleotide-DNA = a 3'-end 2'-deoxyribonucleotide-(2,3-dehydro-2,3-deoxyribose 5'-phosphate)-DNA + a 5'-end 5'-phospho-2'-deoxyribonucleoside-DNA + H(+). Its function is as follows. Involved in base excision repair of DNA damaged by oxidation or by mutagenic agents. Acts as a DNA glycosylase that recognizes and removes damaged bases. Has a preference for oxidized purines, such as 7,8-dihydro-8-oxoguanine (8-oxoG). Has AP (apurinic/apyrimidinic) lyase activity and introduces nicks in the DNA strand. Cleaves the DNA backbone by beta-delta elimination to generate a single-strand break at the site of the removed base with both 3'- and 5'-phosphates. This Listeria monocytogenes serovar 1/2a (strain ATCC BAA-679 / EGD-e) protein is Formamidopyrimidine-DNA glycosylase.